The sequence spans 76 residues: Cytochrome c oxidase subunit 6C-1 (76 aa).

Residues 4-14 (GALLPKPQMHD) lie on the Mitochondrial matrix side of the membrane. A helical transmembrane segment spans residues 15–55 (PLSKRLWVHIVGAFIVDLGVAAAHKFGAAKPRKKAYADFYR). Over 56–76 (NHDPMKDFDEMRKAGVFRSVK) the chain is Mitochondrial intermembrane.

The protein belongs to the cytochrome c oxidase subunit 6c family. Component of the cytochrome c oxidase (complex IV, CIV), a multisubunit enzyme composed of 14 subunits. The complex is composed of a catalytic core of 3 subunits MT-CO1, MT-CO2 and MT-CO3, encoded in the mitochondrial DNA, and 11 supernumerary subunits COX4I, COX5A, COX5B, COX6A, COX6B, COX6C, COX7A, COX7B, COX7C, COX8 and NDUFA4, which are encoded in the nuclear genome. The complex exists as a monomer or a dimer and forms supercomplexes (SCs) in the inner mitochondrial membrane with NADH-ubiquinone oxidoreductase (complex I, CI) and ubiquinol-cytochrome c oxidoreductase (cytochrome b-c1 complex, complex III, CIII), resulting in different assemblies (supercomplex SCI(1)III(2)IV(1) and megacomplex MCI(2)III(2)IV(2)).

The protein localises to the mitochondrion inner membrane. It functions in the pathway energy metabolism; oxidative phosphorylation. Functionally, component of the cytochrome c oxidase, the last enzyme in the mitochondrial electron transport chain which drives oxidative phosphorylation. The respiratory chain contains 3 multisubunit complexes succinate dehydrogenase (complex II, CII), ubiquinol-cytochrome c oxidoreductase (cytochrome b-c1 complex, complex III, CIII) and cytochrome c oxidase (complex IV, CIV), that cooperate to transfer electrons derived from NADH and succinate to molecular oxygen, creating an electrochemical gradient over the inner membrane that drives transmembrane transport and the ATP synthase. Cytochrome c oxidase is the component of the respiratory chain that catalyzes the reduction of oxygen to water. Electrons originating from reduced cytochrome c in the intermembrane space (IMS) are transferred via the dinuclear copper A center (CU(A)) of subunit 2 and heme A of subunit 1 to the active site in subunit 1, a binuclear center (BNC) formed by heme A3 and copper B (CU(B)). The BNC reduces molecular oxygen to 2 water molecules using 4 electrons from cytochrome c in the IMS and 4 protons from the mitochondrial matrix. The chain is Cytochrome c oxidase subunit 6C-1 (Cox6c1) from Rattus norvegicus (Rat).